The following is a 352-amino-acid chain: Uroporphyrinogen decarboxylase (352 aa).

Substrate contacts are provided by residues 26-30 (RQAGR), F45, D76, Y153, S208, and H323.

It belongs to the uroporphyrinogen decarboxylase family. Homodimer.

It is found in the cytoplasm. It catalyses the reaction uroporphyrinogen III + 4 H(+) = coproporphyrinogen III + 4 CO2. It participates in porphyrin-containing compound metabolism; protoporphyrin-IX biosynthesis; coproporphyrinogen-III from 5-aminolevulinate: step 4/4. In terms of biological role, catalyzes the decarboxylation of four acetate groups of uroporphyrinogen-III to yield coproporphyrinogen-III. This Parasynechococcus marenigrum (strain WH8102) protein is Uroporphyrinogen decarboxylase.